The sequence spans 313 residues: Nematocyst expressed protein 8 (313 aa).

Residues 1–19 (MLRRPLLLVLFTVFSTLYA) form the signal peptide. A disordered region spans residues 24-56 (GVSPPTNESEAEVSPGDDEGPPEPGNEPDVNWR). Residues 32–44 (SEAEVSPGDDEGP) are compositionally biased toward acidic residues. 3 consecutive ShKT domains span residues 65 to 99 (CKDK…CRFC), 109 to 145 (CKDL…CELC), and 151 to 186 (FKYT…CRKY). 7 disulfides stabilise this stretch: Cys65–Cys99, Cys72–Cys92, Cys81–Cys96, Cys109–Cys145, Cys127–Cys142, Cys160–Cys179, and Cys169–Cys183. Residues 222–244 (TAAPSTQPAETTKAPPNTAAPTA) are compositionally biased toward low complexity. The tract at residues 222–313 (TAAPSTQPAE…LCDEKHSSQQ (92 aa)) is disordered. Over residues 245–265 (APTPAPTPAPAPAPTPAPVAP) the composition is skewed to pro residues. The span at 280 to 297 (TPEEQDDNSADESTEIEA) shows a compositional bias: acidic residues.

The protein belongs to the NEP3 family. Nematocytes. In late planulae, is only expressed in a handful of nematocytes in the lower pharynx. Is absent from the tentacles and outer body wall.

Its subcellular location is the nematocyst. The protein resides in the secreted. Its function is as follows. Probable toxin probably only used for predation. The polypeptide is Nematocyst expressed protein 8 (Nematostella vectensis (Starlet sea anemone)).